Reading from the N-terminus, the 515-residue chain is 1-pyrroline-5-carboxylate dehydrogenase (515 aa).

Residues Glu-286 and Cys-320 contribute to the active site.

It belongs to the aldehyde dehydrogenase family. RocA subfamily.

The enzyme catalyses L-glutamate 5-semialdehyde + NAD(+) + H2O = L-glutamate + NADH + 2 H(+). Its pathway is amino-acid degradation; L-proline degradation into L-glutamate; L-glutamate from L-proline: step 2/2. This Geobacillus sp. (strain WCH70) protein is 1-pyrroline-5-carboxylate dehydrogenase.